A 586-amino-acid polypeptide reads, in one-letter code: MSENVDIKYIFVAGYLVVYDHQESAGREYELTREQSKSALPVLPGTIPINIDHESSCVVGTVLTILDLPRGLFCLGVVSTALAPIFLSYVQDDALFANAEEGMVLTETEKFLYLLSNILPSLSLSSRRLEKNEVPGKDFFAHVALCELGRREGTVAIYGATASEAIGAFDDLSAPIKEQLYEIATREKCAEVPRELSRPEITRVLMKKFIHGAFLMDRGTCLKTRREMAAVYNPKYLQANEVITIGIKEHSEETPENAIKDRSVSTQTAPSFDISESQQPSGQTHVPAMESATCSGQFLQTKNGASPSASREDMVYVPFEKYASLLAASARRDNDRRPVSPSREFSRRSRDSTHECSPGRDIWPRGFERHPRLESFMGPGMNHTYRPALYEDPNFCGRFPYIPYQSPASTYPVHPNYYSSNFGQFPGAGTYPIQYPSLHEQTVVSRLDALISALEKNNKRDSEYSENNPRKRSARTISENDPYFPGEMVPAKKITTEQQLCEKKEPVGSGINDILQGILTLQKEVAGLKSASNADSSSERKEELENSNQESARETVDASMPKRLKDAQTKLKRKKEAAAFAQMMAD.

Catalysis depends on charge relay system residues His-53, Ser-123, and His-142. Residues 251-263 (SEETPENAIKDRS) are compositionally biased toward basic and acidic residues. 4 disordered regions span residues 251–288 (SEET…HVPA), 330–364 (ARRD…DIWP), 458–486 (NKRD…YFPG), and 530–586 (SASN…MMAD). Polar residues predominate over residues 264-284 (VSTQTAPSFDISESQQPSGQT). Residues 312 to 331 (EDMVYVPFEKYASLLAASAR) are interaction with pAP. 2 interaction with major capsid protein regions span residues 566–586 (DAQT…MMAD) and 567–586 (AQTK…MMAD).

The protein belongs to the herpesviridae capsid scaffolding protein family. As to quaternary structure, homomultimer. Interacts with major capsid protein. Exists in a monomer-dimer equilibrium with the dimer being the active species. In terms of processing, capsid scaffolding protein is cleaved by assemblin after formation of the spherical procapsid. As a result, the capsid obtains its mature, icosahedral shape. Cleavages occur at two or more sites: release (R-site) and maturation (M-site).

It localises to the host cytoplasm. Its subcellular location is the host nucleus. It carries out the reaction Cleaves -Ala-|-Ser- and -Ala-|-Ala- bonds in the scaffold protein.. Acts as a scaffold protein by binding major capsid protein in the cytoplasm, inducing the nuclear localization of both proteins. Multimerizes in the nucleus such as major capsid protein forms the icosahedral T=16 capsid. Autocatalytic cleavage releases the assembly protein, and subsequently abolishes interaction with major capsid protein. Cleavages products are evicted from the capsid before or during DNA packaging. In terms of biological role, protease that plays an essential role in virion assembly within the nucleus. Catalyzes the cleavage of the assembly protein after formation of the spherical procapsid. By that cleavage, the capsid matures and gains its icosahedral shape. The cleavage sites seem to include -Ala-Ser-, -Ala-Ala-, as well as Ala-Thr bonds. Assemblin and cleavages products are evicted from the capsid before or during DNA packaging. Its function is as follows. Plays a major role in capsid assembly. Acts as a scaffold protein by binding major capsid protein. Multimerizes in the nucleus such as major capsid protein forms the icosahedral T=16 capsid. Cleaved by assemblin after capsid completion. The cleavages products are evicted from the capsid before or during DNA packaging. The protein is Capsid scaffolding protein of Gallus gallus (Chicken).